A 242-amino-acid chain; its full sequence is Zinc import ATP-binding protein ZnuC (242 aa).

In terms of domain architecture, ABC transporter spans 24–241 (INVENLSFFY…EKFLKMFSSY (218 aa)). Position 56 to 63 (56 to 63 (GPNGGGKT)) interacts with ATP.

It belongs to the ABC transporter superfamily. Zinc importer (TC 3.A.1.15.5) family. In terms of assembly, the complex is composed of two ATP-binding proteins (ZnuC), two transmembrane proteins (ZnuB) and a solute-binding protein (ZnuA).

The protein resides in the cell inner membrane. The catalysed reaction is Zn(2+)(out) + ATP(in) + H2O(in) = Zn(2+)(in) + ADP(in) + phosphate(in) + H(+)(in). In terms of biological role, part of the ABC transporter complex ZnuABC involved in zinc import. Responsible for energy coupling to the transport system. This Ehrlichia chaffeensis (strain ATCC CRL-10679 / Arkansas) protein is Zinc import ATP-binding protein ZnuC.